The sequence spans 338 residues: Methionine synthase (338 aa).

Zn(2+) is bound by residues H210, C212, E234, and C294.

Belongs to the archaeal MetE family. Zn(2+) is required as a cofactor.

It participates in amino-acid biosynthesis; L-methionine biosynthesis via de novo pathway. Catalyzes the transfer of a methyl group to L-homocysteine resulting in methionine formation. The physiological methyl donor is unknown. In Pyrococcus horikoshii (strain ATCC 700860 / DSM 12428 / JCM 9974 / NBRC 100139 / OT-3), this protein is Methionine synthase.